We begin with the raw amino-acid sequence, 230 residues long: Dephospho-CoA kinase (230 aa).

The DPCK domain occupies 3–225; sequence IIGLTGGIAT…REGGAICPTP (223 aa). ATP is bound at residue 11 to 16; sequence ATGKST.

This sequence belongs to the CoaE family.

Its subcellular location is the cytoplasm. It carries out the reaction 3'-dephospho-CoA + ATP = ADP + CoA + H(+). Its pathway is cofactor biosynthesis; coenzyme A biosynthesis; CoA from (R)-pantothenate: step 5/5. Its function is as follows. Catalyzes the phosphorylation of the 3'-hydroxyl group of dephosphocoenzyme A to form coenzyme A. The protein is Dephospho-CoA kinase of Synechococcus sp. (strain JA-3-3Ab) (Cyanobacteria bacterium Yellowstone A-Prime).